Consider the following 234-residue polypeptide: Leucyl/phenylalanyl-tRNA--protein transferase (234 aa).

It belongs to the L/F-transferase family.

It localises to the cytoplasm. The enzyme catalyses N-terminal L-lysyl-[protein] + L-leucyl-tRNA(Leu) = N-terminal L-leucyl-L-lysyl-[protein] + tRNA(Leu) + H(+). It carries out the reaction N-terminal L-arginyl-[protein] + L-leucyl-tRNA(Leu) = N-terminal L-leucyl-L-arginyl-[protein] + tRNA(Leu) + H(+). It catalyses the reaction L-phenylalanyl-tRNA(Phe) + an N-terminal L-alpha-aminoacyl-[protein] = an N-terminal L-phenylalanyl-L-alpha-aminoacyl-[protein] + tRNA(Phe). In terms of biological role, functions in the N-end rule pathway of protein degradation where it conjugates Leu, Phe and, less efficiently, Met from aminoacyl-tRNAs to the N-termini of proteins containing an N-terminal arginine or lysine. The sequence is that of Leucyl/phenylalanyl-tRNA--protein transferase from Nitratidesulfovibrio vulgaris (strain ATCC 29579 / DSM 644 / CCUG 34227 / NCIMB 8303 / VKM B-1760 / Hildenborough) (Desulfovibrio vulgaris).